A 253-amino-acid chain; its full sequence is MAAAFRKAAKSRQREHRERSQPGFRKHLGLLEKKKDYKLRADDYRKKQEYLKALRKKALEKNPDEFYYKMTRVKLQDGVHIIKETKEEVTPEQLKLMRTQDVKYIEMKRVAEAKKIERLKSELHLLDFQGKQQNKHVFFFDTKKEVEQFDVATHLQTAPELVDRVFNRPRIETLQKEKVKGVTNQTGLKRIAKERQKQYNCLTQRIEREKKLFVIAQKIQTRKDLMDKTQKVKVKKETVNSPAIYKFQSRRKR.

Positions M1–K26 are disordered. Residues K74, K83, and K86 each participate in a glycyl lysine isopeptide (Lys-Gly) (interchain with G-Cter in SUMO2) cross-link. Position 90 is a phosphothreonine (T90). Residues K103, K120, K143, K144, K180, K211, K218, K235, and K236 each participate in a glycyl lysine isopeptide (Lys-Gly) (interchain with G-Cter in SUMO2) cross-link. The residue at position 241 (S241) is a Phosphoserine. A Glycyl lysine isopeptide (Lys-Gly) (interchain with G-Cter in SUMO2) cross-link involves residue K246.

It belongs to the UTP11 family. In terms of assembly, part of the small subunit (SSU) processome, composed of more than 70 proteins and the RNA chaperone small nucleolar RNA (snoRNA) U3.

The protein localises to the nucleus. It is found in the nucleolus. Part of the small subunit (SSU) processome, first precursor of the small eukaryotic ribosomal subunit. During the assembly of the SSU processome in the nucleolus, many ribosome biogenesis factors, an RNA chaperone and ribosomal proteins associate with the nascent pre-rRNA and work in concert to generate RNA folding, modifications, rearrangements and cleavage as well as targeted degradation of pre-ribosomal RNA by the RNA exosome. Involved in nucleolar processing of pre-18S ribosomal RNA. The chain is Probable U3 small nucleolar RNA-associated protein 11 from Homo sapiens (Human).